The following is a 142-amino-acid chain: Transcriptional regulator MraZ (142 aa).

2 SpoVT-AbrB domains span residues 5–51 (ASAL…PRPE) and 77–120 (AMDV…DSQT).

The protein belongs to the MraZ family. Forms oligomers.

The protein resides in the cytoplasm. The protein localises to the nucleoid. This Burkholderia ambifaria (strain MC40-6) protein is Transcriptional regulator MraZ.